We begin with the raw amino-acid sequence, 360 residues long: DNA integrity scanning protein DisA (360 aa).

The 139-residue stretch at 9 to 147 (DNDLMDILNI…NNIKYVLRDS (139 aa)) folds into the DAC domain. ATP is bound by residues G76, L94, and 107 to 111 (TRHRT).

Belongs to the DisA family. Homooctamer. It depends on Mg(2+) as a cofactor.

The catalysed reaction is 2 ATP = 3',3'-c-di-AMP + 2 diphosphate. Participates in a DNA-damage check-point that is active prior to asymmetric division when DNA is damaged. DisA forms globular foci that rapidly scan along the chromosomes during sporulation, searching for lesions. When a lesion is present, DisA pauses at the lesion site. This triggers a cellular response that culminates in a temporary block in sporulation initiation. Functionally, also has diadenylate cyclase activity, catalyzing the condensation of 2 ATP molecules into cyclic di-AMP (c-di-AMP). c-di-AMP acts as a signaling molecule that couples DNA integrity with progression of sporulation. The rise in c-di-AMP level generated by DisA while scanning the chromosome, operates as a positive signal that advances sporulation; upon encountering a lesion, the DisA focus arrests at the damaged site and halts c-di-AMP synthesis. This is DNA integrity scanning protein DisA from Clostridium tetani (strain Massachusetts / E88).